A 381-amino-acid chain; its full sequence is Tryptophan--tRNA ligase (381 aa).

The 'HIGH' region signature appears at proline 82 to histidine 90. Positions lysine 254–serine 258 match the 'KMSKS' region motif.

The protein belongs to the class-I aminoacyl-tRNA synthetase family.

The protein resides in the cytoplasm. It carries out the reaction tRNA(Trp) + L-tryptophan + ATP = L-tryptophyl-tRNA(Trp) + AMP + diphosphate + H(+). The sequence is that of Tryptophan--tRNA ligase from Sulfurisphaera tokodaii (strain DSM 16993 / JCM 10545 / NBRC 100140 / 7) (Sulfolobus tokodaii).